The chain runs to 108 residues: uncharacterized protein (108 aa).

The disordered stretch occupies residues 81-108 (TNHHQQQQNHQNQQQQQQQPNGIFENNI). The segment covering 83 to 99 (HHQQQQNHQNQQQQQQQ) has biased composition (low complexity).

This is an uncharacterized protein from Dictyostelium discoideum (Social amoeba).